The chain runs to 210 residues: Uracil phosphoribosyltransferase (210 aa).

5-phospho-alpha-D-ribose 1-diphosphate-binding positions include R80, R105, and 132 to 140 (DPMLATGGS). Uracil contacts are provided by residues I195 and 200-202 (GDA). D201 is a 5-phospho-alpha-D-ribose 1-diphosphate binding site.

The protein belongs to the UPRTase family. Mg(2+) is required as a cofactor.

It catalyses the reaction UMP + diphosphate = 5-phospho-alpha-D-ribose 1-diphosphate + uracil. The protein operates within pyrimidine metabolism; UMP biosynthesis via salvage pathway; UMP from uracil: step 1/1. With respect to regulation, allosterically activated by GTP. Functionally, catalyzes the conversion of uracil and 5-phospho-alpha-D-ribose 1-diphosphate (PRPP) to UMP and diphosphate. In Thermoanaerobacter pseudethanolicus (strain ATCC 33223 / 39E) (Clostridium thermohydrosulfuricum), this protein is Uracil phosphoribosyltransferase.